A 1134-amino-acid polypeptide reads, in one-letter code: MSTTKLTYSSGSSAKSKHSVRVAQTTADAKLHAVYEESGESGDSFDYSKSINATKSTGETIPAQAVTAYLQRMQRGGLVQPFGCMLAVEEGSFRVIAFSDNAGEMLDLMPQSVPSLGSGQQDVLTIGTDARTLFTAAASALEKAAGAVDLSMLNPIWVQSKTSAKPFYAIVHRIDVGLVMDLEPVKASDTRVGSAAGALQSHKLAAKAISRLQSLPGGDIGLLCDTVVEEVRDVTGYDLVMAYKFHEDEHGEVVAEIRRSDLEPYLGLHYPATDIPQASRFLFMKNRVRMICDCSAPPVKITQDKELRQPISLAGSTLRAPHGCHAQYMGNMGSVASLVMAMIINDNDEPSGGGGGGGQHKGRRLWGLVVCHHTSPRSVPFLRSACEFLMQVFGLQLNMEAAVAAHVREKHILRTQTLLCDMLLRDAPIGIVSQSPNIMDLVKCDGAALYYGKRFWLLGITPSEAQIKDIAEWLLEHHKDSTGLSTDSLADAGYPGAASLGDEVCGMAAAKITAKDFLFWFRSHTAKEVKWGGAKHDPDDKDDGRKMHPRSSFKAFLEVVKRRSLPWEDVEMDAIHSLQLILRGSFQDIDDSDTKTMIHARLNDLKLQGMDELSTVANEMVRLIETATAPILAVDSSGFINGWNAKVADVTGLPVTEAMGRSLAKELVLHESADMVERLLYLALQGDEEQNVELKLKTFGGQKDKEAVILVVNACASRDVSDNVVGVCFVGQDVTGQKVVMDKFTRIQGDYKAIVQNPNPLIPPIFGADEFGYCSEWNPAMEKLSGWRREEVLGKMLVGEIFGIQMMYCRLKGQDAVTKFMIVLNSAADGQDTEKFPFAFFDRQGKYVEALLTATKRADAEGSITGVFCFLHIASAELQQALTVQRATEKVALSKLKELAYIRQEIKNPLYGIMFTRTLMETTDLSEDQKQYVETGAVCEKQIRKILDDMDLESIEDGYLELDTTEFMMGTVMDAVISQGMITSKEKNLQLIRETPKEIKAMFLYGDQVRLQQVLADFLLNAIRFTPSSENWVGIKVATSRKRLGGVVHVMHLEFRITHPGVGLPEELVQEMFDRGRGMTQEGLGLSMCRKLVKLMNGEVEYIREAGKNYFLVSLELPLAQRDDAGSVKFQASS.

Residues 219–401 form the GAF domain; the sequence is DIGLLCDTVV…VFGLQLNMEA (183 aa). C324 is a phytochromobilin binding site. In terms of domain architecture, PAS 1 spans 616–687; sequence VANEMVRLIE…RLLYLALQGD (72 aa). The region spanning 690-746 is the PAC domain; sequence QNVELKLKTFGGQKDKEAVILVVNACASRDVSDNVVGVCFVGQDVTGQKVVMDKFTR. The PAS 2 domain maps to 750–821; sequence DYKAIVQNPN…KGQDAVTKFM (72 aa). The Histidine kinase domain maps to 901–1121; that stretch reads YIRQEIKNPL…LVSLELPLAQ (221 aa).

This sequence belongs to the phytochrome family. As to quaternary structure, homodimer. Post-translationally, contains one covalently linked phytochromobilin chromophore.

Its function is as follows. Regulatory photoreceptor which exists in two forms that are reversibly interconvertible by light: the Pr form that absorbs maximally in the red region of the spectrum and the Pfr form that absorbs maximally in the far-red region. Photoconversion of Pr to Pfr induces an array of morphogenic responses, whereas reconversion of Pfr to Pr cancels the induction of those responses. Pfr controls the expression of a number of nuclear genes including those encoding the small subunit of ribulose-bisphosphate carboxylase, chlorophyll A/B binding protein, protochlorophyllide reductase, rRNA, etc. It also controls the expression of its own gene(s) in a negative feedback fashion. This chain is Phytochrome 1 (PHY1), found in Selaginella martensii (Martens's spike moss).